We begin with the raw amino-acid sequence, 132 residues long: Small ribosomal subunit protein uS8 (132 aa).

The protein belongs to the universal ribosomal protein uS8 family. Part of the 30S ribosomal subunit. Contacts proteins S5 and S12.

Its function is as follows. One of the primary rRNA binding proteins, it binds directly to 16S rRNA central domain where it helps coordinate assembly of the platform of the 30S subunit. The protein is Small ribosomal subunit protein uS8 of Lactobacillus johnsonii (strain CNCM I-12250 / La1 / NCC 533).